The chain runs to 161 residues: Tropomyosin-2 (161 aa).

Positions 1-161 (MEKIKEKLNS…DEIANSLENL (161 aa)) form a coiled coil. Residues 32–43 (LEQSNTEKENEI) are compositionally biased toward basic and acidic residues. The disordered stretch occupies residues 32 to 97 (LEQSNTEKEN…NQDLEQQLED (66 aa)). Position 55 is a phosphoserine (S55). The span at 62–83 (SQLSDTKQLAEDSNNLRSNNEN) shows a compositional bias: polar residues. A phosphoserine mark is found at S116 and S157.

In terms of assembly, homodimer.

The protein resides in the cytoplasm. Its subcellular location is the cytoskeleton. In terms of biological role, involved in cell morphogenesis. Binds to F-actin and stabilizes the actin filaments. The chain is Tropomyosin-2 (TPM2) from Saccharomyces cerevisiae (strain ATCC 204508 / S288c) (Baker's yeast).